An 837-amino-acid polypeptide reads, in one-letter code: Leucine-zipper-like transcriptional regulator 1 (837 aa).

An N-acetylalanine modification is found at alanine 2. 6 Kelch repeats span residues 76–125 (AIYV…VYGS), 127–182 (MFVF…VYSD), 184–235 (LWIF…VCRD), 236–282 (KMFV…QRRY), 292–338 (HLYV…PERA), and 396–447 (AMYI…FVLG). The disordered stretch occupies residues 324-352 (SSDSEVGGAEMPERASSSEDASTLTSEER). BTB domains lie at 440–534 (CDVE…KYPR) and 664–733 (CDIT…NMPP).

It belongs to the LZTR1 family. As to quaternary structure, homodimer. Component of the BCR(LZTR1) E3 ubiquitin ligase complex, at least composed of CUL3, LZTR1 and RBX1. Interacts with Ras (K-Ras/KRAS, N-Ras/NRAS and H-Ras/HRAS). Interacts with RAF1. Interacts with SHOC2. Interacts with PPP1CB. Post-translationally, phosphorylated on tyrosine upon induction of apoptosis, leading to its degradation by the proteasome. As to expression, widely expressed.

The protein resides in the endomembrane system. It is found in the recycling endosome. Its subcellular location is the golgi apparatus. It participates in protein modification; protein ubiquitination. Functionally, substrate-specific adapter of a BCR (BTB-CUL3-RBX1) E3 ubiquitin-protein ligase complex that mediates ubiquitination of Ras (K-Ras/KRAS, N-Ras/NRAS and H-Ras/HRAS). Is a negative regulator of RAS-MAPK signaling that acts by controlling Ras levels and decreasing Ras association with membranes. The protein is Leucine-zipper-like transcriptional regulator 1 of Mus musculus (Mouse).